We begin with the raw amino-acid sequence, 106 residues long: UPF0145 protein CLL_A2504 (106 aa).

Belongs to the UPF0145 family.

In Clostridium botulinum (strain Eklund 17B / Type B), this protein is UPF0145 protein CLL_A2504.